We begin with the raw amino-acid sequence, 24 residues long: Homotarsinin (24 aa).

Arginine amide is present on arginine 24.

As to quaternary structure, homodimer; disulfide-linked. In terms of tissue distribution, expressed by the skin glands.

It localises to the secreted. Antimicrobial peptide. Active against Gram-negative bacteria E.coli ATCC 25922 (MIC=1.5 uM) and P.aeruginosa ATTC 27853 (MIC=23.2 uM) and against Gram-positive bacterium S.aureus ATCC 29313 (MIC=11.6 uM). Has no hemolytic activity. Associates with and disrupts membranes in vitro. This Phyllomedusa tarsius (Brownbelly leaf frog) protein is Homotarsinin.